Here is a 372-residue protein sequence, read N- to C-terminus: tRNA-specific 2-thiouridylase MnmA (372 aa).

ATP contacts are provided by residues 9–16 (GMSGGVDS) and methionine 35. The interval 95–97 (NPD) is interaction with target base in tRNA. Cysteine 100 acts as the Nucleophile in catalysis. Cysteines 100 and 201 form a disulfide. Residue glycine 124 participates in ATP binding. The segment at 151-153 (KDQ) is interaction with tRNA. Residue cysteine 201 is the Cysteine persulfide intermediate of the active site. The tract at residues 317 to 318 (RY) is interaction with tRNA.

It belongs to the MnmA/TRMU family.

The protein localises to the cytoplasm. It catalyses the reaction S-sulfanyl-L-cysteinyl-[protein] + uridine(34) in tRNA + AH2 + ATP = 2-thiouridine(34) in tRNA + L-cysteinyl-[protein] + A + AMP + diphosphate + H(+). Its function is as follows. Catalyzes the 2-thiolation of uridine at the wobble position (U34) of tRNA, leading to the formation of s(2)U34. In Herminiimonas arsenicoxydans, this protein is tRNA-specific 2-thiouridylase MnmA.